The following is a 347-amino-acid chain: Phosphate acyltransferase (347 aa).

This sequence belongs to the PlsX family. In terms of assembly, homodimer. Probably interacts with PlsY.

The protein localises to the cytoplasm. The enzyme catalyses a fatty acyl-[ACP] + phosphate = an acyl phosphate + holo-[ACP]. It functions in the pathway lipid metabolism; phospholipid metabolism. In terms of biological role, catalyzes the reversible formation of acyl-phosphate (acyl-PO(4)) from acyl-[acyl-carrier-protein] (acyl-ACP). This enzyme utilizes acyl-ACP as fatty acyl donor, but not acyl-CoA. In Anaplasma marginale (strain St. Maries), this protein is Phosphate acyltransferase.